A 442-amino-acid chain; its full sequence is Endothelin receptor type B (442 aa).

The N-terminal stretch at 1 to 26 (MQPPPSLCGRALVALVLACGLSRIWG) is a signal peptide. The Extracellular portion of the chain corresponds to 27 to 101 (EERGFPPDRA…GSIEIKETFK (75 aa)). A glycan (N-linked (GlcNAc...) asparagine) is linked at N59. The tract at residues 69–88 (AEVPKGDRTAGSPPRTISPP) is disordered. A helical transmembrane segment spans residues 102 to 126 (YINTVVSCLVFVLGIIGNSTLLRII). Residues 127-137 (YKNKCMRNGPN) lie on the Cytoplasmic side of the membrane. The chain crosses the membrane as a helical span at residues 138–163 (ILIASLALGDLLHIIIDIPITVYKLL). At 164-175 (AEDWPFGVEMCK) the chain is on the extracellular side. C174 and C255 are oxidised to a cystine. A helical transmembrane segment spans residues 176–197 (LVPFIQKASVGITVLSLCALSI). The Cytoplasmic segment spans residues 198 to 218 (DRYRAVASWSRIKGIGVPKWT). A helical transmembrane segment spans residues 219 to 243 (AVEIVLIWVVSVVLAVPEAVGFDMI). Residues 244-271 (TIDYKGRYLRICLLHPTQKTAFMQFYKT) are Extracellular-facing. The chain crosses the membrane as a helical span at residues 272 to 296 (AKDWWLFSFYFCLPLAITAFFYTLM). Residues 297-324 (TCEMLRKKSGMQIALNDHLKQRREVAKT) are Cytoplasmic-facing. Position 305 is a phosphoserine (S305). A helical transmembrane segment spans residues 325-350 (VFCLVLVFALCWLPLHLSRILKLTIY). Topologically, residues 351–362 (DQNDPNRCELLS) are extracellular. A helical membrane pass occupies residues 363–389 (FLLVLDYIGINMASLNSCINPIALYLV). Residues 390–442 (SKRFKNCFKSCLCCWCQSFEEKQSLEEKQSCLKFKANDHGYDNFRSSNKYSSS) lie on the Cytoplasmic side of the membrane. 3 S-palmitoyl cysteine lipidation sites follow: C402, C403, and C405. A Phosphoserine modification is found at S419. Y439 bears the Phosphotyrosine mark. Phosphoserine is present on residues S440, S441, and S442.

This sequence belongs to the G-protein coupled receptor 1 family. Endothelin receptor subfamily. EDNRB sub-subfamily.

The protein localises to the cell membrane. Its function is as follows. Non-specific receptor for endothelin 1, 2, and 3. Mediates its action by association with G proteins that activate a phosphatidylinositol-calcium second messenger system. The chain is Endothelin receptor type B (EDNRB) from Canis lupus familiaris (Dog).